The primary structure comprises 181 residues: Kappa-casein (181 aa).

Residues 1-21 (MMRNFIVVVNILALTLPFLAA) form the signal peptide. Residue Thr123 is modified to Phosphothreonine. 3 O-linked (GalNAc...) threonine glycosylation sites follow: Thr134, Thr144, and Thr155. Residue Ser162 is modified to Phosphoserine; alternate. O-linked (GalNAc...) serine; alternate glycosylation is present at Ser162. Residue Ser178 is modified to Phosphoserine.

It belongs to the kappa-casein family. Mammary gland specific. Secreted in milk.

It is found in the secreted. Functionally, kappa-casein stabilizes micelle formation, preventing casein precipitation in milk. The protein is Kappa-casein (Csn3) of Mus musculus (Mouse).